Reading from the N-terminus, the 1097-residue chain is Protease Do-like 7 (1097 aa).

The interval 55–243 is serine protease; sequence VLRTTACRAF…LPLQRVVRAL (189 aa). Residues 269–366 enclose the PDZ domain; that stretch reads MTFLHKGFDE…RGGQPLSVSV (98 aa). His-524 (charge relay system) is an active-site residue. Polar residues predominate over residues 546–556; sequence TSSGDGSQNDF. A disordered region spans residues 546–577; it reads TSSGDGSQNDFGSEAKKQRVDEDSSDGIAANG. Basic and acidic residues predominate over residues 558 to 567; sequence SEAKKQRVDE. Ser-785 acts as the Charge relay system in catalysis.

It belongs to the peptidase S1C family.

It is found in the cytoplasm. Probable serine protease. This is Protease Do-like 7 (DEGP7) from Arabidopsis thaliana (Mouse-ear cress).